We begin with the raw amino-acid sequence, 169 residues long: Transmembrane protein B169L (169 aa).

The next 2 helical transmembrane spans lie at 28 to 48 (NPFIVALIITAVVLVVFFAIC) and 60 to 80 (TAIYVYICIVALLFLHYYVLN). A glycan (N-linked (GlcNAc...) asparagine; by host) is linked at N88. The tract at residues 107–169 (DEIIPPISPP…EVIMPSQYNN (63 aa)) is disordered. The segment covering 144–154 (SKPASSADSKP) has biased composition (low complexity).

It belongs to the asfivirus B169L family.

The protein localises to the host membrane. It localises to the virion. The polypeptide is Transmembrane protein B169L (Ornithodoros (relapsing fever ticks)).